Reading from the N-terminus, the 552-residue chain is MERFLRKFNMNSYYANHVKMFQALSPQWTCSHLRRNCLFDGVCAKQHFEEVMNRITERNDAHAAYRLAEMAQITMLDREKVWLQCYKSFSEPYDENIAEKIQICGRELLDKYKNSDMVTKIDNMIKFDPTRIVLDDNFSAFPYLYIPVNYGQMVQPIRIMRYRQIGYCFYQPDAVDDWIAPDIYPMRRPRMEMCRQVKEAVGSCSFTGFSGPVFQIMFFPMQMLPYMENEGFAKIINRYAQMAVQAIFTSRLHRGERYVTQLFGECPAGEFPMHHMMLRRWEGNGRPQTLVQMRHTIAGNKEWQTWLLPMILVRIAVREPANFEYVRGFMQGRHKCQLCFLKNGCDRETFYHIDVRTSEIVGCSTVTQVMIGEHVDISLPVQKIKLTGTEHLGRASDHYFKYNATTGMEALIRTAIQIHRWIRGTGIWENDEWQEGIYLLARVLLRWELSTQARSIMFRLFCFVCFGYAPRKDGTVPDWKDLGAFLDIILNGTELGDDEDETGQTGIMFELSRCVMTLAYAERIKVVTFNAPECDEGAVMNIAQAMANMWDN.

This sequence belongs to the orbivirus non-structural protein NS1 family.

In Epizootic hemorrhagic disease virus 2 (strain Alberta) (EHDV-2), this protein is Non-structural protein NS1 (Segment-5).